We begin with the raw amino-acid sequence, 334 residues long: Holliday junction branch migration complex subunit RuvB (334 aa).

The segment at 4-184 (ADRLIQPQLQ…FGIPLRLEFY (181 aa)) is large ATPase domain (RuvB-L). Residues arginine 24, glycine 65, lysine 68, threonine 69, threonine 70, 131–133 (EDY), arginine 174, tyrosine 184, and arginine 221 each bind ATP. Residue threonine 69 coordinates Mg(2+). The tract at residues 185–255 (NIKDLSTIVT…VADHALDLLD (71 aa)) is small ATPAse domain (RuvB-S). The head domain (RuvB-H) stretch occupies residues 258-334 (NEGFDYMDRK…YQHFQLIKPE (77 aa)). The DNA site is built by arginine 294, arginine 313, and arginine 318.

The protein belongs to the RuvB family. In terms of assembly, homohexamer. Forms an RuvA(8)-RuvB(12)-Holliday junction (HJ) complex. HJ DNA is sandwiched between 2 RuvA tetramers; dsDNA enters through RuvA and exits via RuvB. An RuvB hexamer assembles on each DNA strand where it exits the tetramer. Each RuvB hexamer is contacted by two RuvA subunits (via domain III) on 2 adjacent RuvB subunits; this complex drives branch migration. In the full resolvosome a probable DNA-RuvA(4)-RuvB(12)-RuvC(2) complex forms which resolves the HJ.

It localises to the cytoplasm. It catalyses the reaction ATP + H2O = ADP + phosphate + H(+). Functionally, the RuvA-RuvB-RuvC complex processes Holliday junction (HJ) DNA during genetic recombination and DNA repair, while the RuvA-RuvB complex plays an important role in the rescue of blocked DNA replication forks via replication fork reversal (RFR). RuvA specifically binds to HJ cruciform DNA, conferring on it an open structure. The RuvB hexamer acts as an ATP-dependent pump, pulling dsDNA into and through the RuvAB complex. RuvB forms 2 homohexamers on either side of HJ DNA bound by 1 or 2 RuvA tetramers; 4 subunits per hexamer contact DNA at a time. Coordinated motions by a converter formed by DNA-disengaged RuvB subunits stimulates ATP hydrolysis and nucleotide exchange. Immobilization of the converter enables RuvB to convert the ATP-contained energy into a lever motion, pulling 2 nucleotides of DNA out of the RuvA tetramer per ATP hydrolyzed, thus driving DNA branch migration. The RuvB motors rotate together with the DNA substrate, which together with the progressing nucleotide cycle form the mechanistic basis for DNA recombination by continuous HJ branch migration. Branch migration allows RuvC to scan DNA until it finds its consensus sequence, where it cleaves and resolves cruciform DNA. The protein is Holliday junction branch migration complex subunit RuvB of Shewanella putrefaciens (strain CN-32 / ATCC BAA-453).